Reading from the N-terminus, the 223-residue chain is MADSEEQEDYKIQGFDADIQNLLKTALKEPGSVDLEKAANVIVDQSLRDSTFSREAGRMCYTIIQVESKQTGCTMFRSSLLNRLQVEYRNRKETRARSLQEWVCYVGFMCNVFDYLRVNNMPMLALVNPVYDCLFDLVQPDSLKKEVEVDCLVLQLHRVGEQLEKMNCQRMDELFSQLRDGFLLQGGLSSLTQLLLLEMIEYRAAGWSMTDAAQKYYYSEVSD.

In terms of domain architecture, MIF4G spans 9–206 (DYKIQGFDAD…LEMIEYRAAG (198 aa)).

It belongs to the MIF4GD family. As to quaternary structure, interacts with eif4g1, eif4g2 and slbp; probably tethered by SLBP to the 3'-end of mRNAs ending with the histone stem-loop, it also interacts with eif4g1 which is bound to their 5'-end.

Its subcellular location is the cytoplasm. It is found in the nucleus. Its function is as follows. Functions in replication-dependent translation of histone mRNAs which differ from other eukaryotic mRNAs in that they do not end with a poly-A tail but a stem-loop. May participate in circularizing those mRNAs specifically enhancing their translation. The chain is MIF4G domain-containing protein B (mif4gd-b) from Xenopus laevis (African clawed frog).